The primary structure comprises 116 residues: Flagellar transcriptional regulator FlhD (116 aa).

Belongs to the FlhD family. Homodimer; disulfide-linked. Forms a heterohexamer composed of two FlhC and four FlhD subunits. Each FlhC binds a FlhD dimer, forming a heterotrimer, and a hexamer assembles by dimerization of two heterotrimers.

The protein localises to the cytoplasm. Functions in complex with FlhC as a master transcriptional regulator that regulates transcription of several flagellar and non-flagellar operons by binding to their promoter region. Activates expression of class 2 flagellar genes, including fliA, which is a flagellum-specific sigma factor that turns on the class 3 genes. Also regulates genes whose products function in a variety of physiological pathways. The sequence is that of Flagellar transcriptional regulator FlhD from Yersinia pseudotuberculosis serotype O:1b (strain IP 31758).